A 505-amino-acid polypeptide reads, in one-letter code: Glycerol kinase (505 aa).

ADP is bound at residue threonine 12. The ATP site is built by threonine 12, threonine 13, and serine 14. Threonine 12 provides a ligand contact to sn-glycerol 3-phosphate. Arginine 16 contributes to the ADP binding site. Positions 82, 83, 134, and 249 each coordinate sn-glycerol 3-phosphate. Residues arginine 82, glutamate 83, tyrosine 134, aspartate 249, and glutamine 250 each coordinate glycerol. Residues threonine 271 and glycine 315 each coordinate ADP. ATP-binding residues include threonine 271, glycine 315, glutamine 319, and glycine 416. Residues glycine 416 and asparagine 420 each coordinate ADP.

Belongs to the FGGY kinase family.

It catalyses the reaction glycerol + ATP = sn-glycerol 3-phosphate + ADP + H(+). The protein operates within polyol metabolism; glycerol degradation via glycerol kinase pathway; sn-glycerol 3-phosphate from glycerol: step 1/1. Its activity is regulated as follows. Inhibited by fructose 1,6-bisphosphate (FBP). Key enzyme in the regulation of glycerol uptake and metabolism. Catalyzes the phosphorylation of glycerol to yield sn-glycerol 3-phosphate. This Mycolicibacterium gilvum (strain PYR-GCK) (Mycobacterium gilvum (strain PYR-GCK)) protein is Glycerol kinase.